Here is a 407-residue protein sequence, read N- to C-terminus: L-cysteine:1D-myo-inositol 2-amino-2-deoxy-alpha-D-glucopyranoside ligase (407 aa).

Residue Cys-43 coordinates Zn(2+). L-cysteinyl-5'-AMP contacts are provided by residues Cys-43–Thr-46, Thr-58, and Asn-81–Thr-83. The 'HIGH' region motif lies at Ile-45 to His-55. The short motif at Gln-183 to Pro-188 is the 'ERGGDP' region element. Trp-223 contributes to the L-cysteinyl-5'-AMP binding site. Cys-227 lines the Zn(2+) pocket. Residue Gly-245–Asp-247 coordinates L-cysteinyl-5'-AMP. His-252 is a binding site for Zn(2+). Val-279 contacts L-cysteinyl-5'-AMP. Residues Lys-285–Ser-289 carry the 'KMSKS' region motif.

It belongs to the class-I aminoacyl-tRNA synthetase family. MshC subfamily. As to quaternary structure, monomer. Zn(2+) serves as cofactor.

The enzyme catalyses 1D-myo-inositol 2-amino-2-deoxy-alpha-D-glucopyranoside + L-cysteine + ATP = 1D-myo-inositol 2-(L-cysteinylamino)-2-deoxy-alpha-D-glucopyranoside + AMP + diphosphate + H(+). Functionally, catalyzes the ATP-dependent condensation of GlcN-Ins and L-cysteine to form L-Cys-GlcN-Ins. This is L-cysteine:1D-myo-inositol 2-amino-2-deoxy-alpha-D-glucopyranoside ligase from Streptosporangium roseum (strain ATCC 12428 / DSM 43021 / JCM 3005 / KCTC 9067 / NCIMB 10171 / NRRL 2505 / NI 9100).